The sequence spans 177 residues: O-acetyl-ADP-ribose deacetylase (177 aa).

Residues 1–175 (MNSRIHVIHG…LYQRLLTQQG (175 aa)) form the Macro domain. Substrate contacts are provided by residues 11–12 (DI), Asn-25, 33–35 (GVD), and 122–126 (STGVY). Asp-35 functions as the Proton acceptor in the catalytic mechanism.

It belongs to the MacroD-type family. YmdB subfamily. Homodimer. Interacts with RNase III.

It catalyses the reaction 3''-O-acetyl-ADP-D-ribose + H2O = ADP-D-ribose + acetate + H(+). It carries out the reaction 2''-O-acetyl-ADP-D-ribose + H2O = ADP-D-ribose + acetate + H(+). Deacetylates O-acetyl-ADP ribose to yield ADP-ribose and free acetate. Down-regulates ribonuclease 3 (RNase III) activity. Acts by interacting directly with the region of the ribonuclease that is required for dimerization/activation. In Citrobacter rodentium (strain ICC168) (Citrobacter freundii biotype 4280), this protein is O-acetyl-ADP-ribose deacetylase.